Here is a 173-residue protein sequence, read N- to C-terminus: RNA pyrophosphohydrolase (173 aa).

The Nudix hydrolase domain maps to 6-149; that stretch reads GFRANVGIII…KRDVYRKVMK (144 aa). Residues 38–59 carry the Nudix box motif; that stretch reads GGVDDGESAEEAMYRELYEEVG.

Belongs to the Nudix hydrolase family. RppH subfamily. Requires a divalent metal cation as cofactor.

Functionally, accelerates the degradation of transcripts by removing pyrophosphate from the 5'-end of triphosphorylated RNA, leading to a more labile monophosphorylated state that can stimulate subsequent ribonuclease cleavage. In Shewanella pealeana (strain ATCC 700345 / ANG-SQ1), this protein is RNA pyrophosphohydrolase.